Reading from the N-terminus, the 136-residue chain is Small ribosomal subunit protein uS8c (136 aa).

It belongs to the universal ribosomal protein uS8 family. As to quaternary structure, part of the 30S ribosomal subunit.

The protein resides in the plastid. It is found in the chloroplast. Its function is as follows. One of the primary rRNA binding proteins, it binds directly to 16S rRNA central domain where it helps coordinate assembly of the platform of the 30S subunit. The sequence is that of Small ribosomal subunit protein uS8c (rps8) from Hordeum vulgare (Barley).